The sequence spans 85 residues: Large ribosomal subunit protein bL27 (85 aa).

This sequence belongs to the bacterial ribosomal protein bL27 family.

The polypeptide is Large ribosomal subunit protein bL27 (Campylobacter hominis (strain ATCC BAA-381 / DSM 21671 / CCUG 45161 / LMG 19568 / NCTC 13146 / CH001A)).